Consider the following 716-residue polypeptide: Inhibitor of nuclear factor kappa-B kinase subunit epsilon (716 aa).

The Protein kinase domain maps to 9–315 (WHTDDLLGQG…LQRVVVHVFS (307 aa)). Residue 15–23 (LGQGATASV) participates in ATP binding. Residue Lys-30 forms a Glycyl lysine isopeptide (Lys-Gly) (interchain with G-Cter in ubiquitin) linkage. Lys-38 contributes to the ATP binding site. The active-site Proton acceptor is Asp-135. Position 172 is a phosphoserine; by autocatalysis and IKKB (Ser-172). Lys-231 participates in a covalent cross-link: Glycyl lysine isopeptide (Lys-Gly) (interchain with G-Cter in SUMO1). The tract at residues 383-647 (STAIPKGLAF…VQESLSKLLE (265 aa)) is interaction with DDX3X. Lys-401 participates in a covalent cross-link: Glycyl lysine isopeptide (Lys-Gly) (interchain with G-Cter in ubiquitin). A leucine-zipper region spans residues 436–457 (QELMFRGLHWVMEVLQATCRRT). At Thr-501 the chain carries Phosphothreonine. Ser-664 is subject to Phosphoserine.

The protein belongs to the protein kinase superfamily. Ser/Thr protein kinase family. I-kappa-B kinase subfamily. In terms of assembly, homodimer. Interacts with MAVS/IPS1. Interacts (via protein kinase domain) with TTLL12 (via N-terminus); the interaction prevents MAVS binding to IKBKE. Interacts with the adapter proteins AZI2/NAP1, TANK and TBKBP1/SINTBAD. Interacts with SIKE1. Interacts with TICAM1/TRIF, IRF3 and RIGI; interactions are disrupted by the interaction between IKBKE and SIKE1. Interacts with TOPORS; induced by DNA damage. Interacts with CYLD. Interacts (when polyubiquitinated) with IKBKB, IKBKG and MYD88. Interacts with IFIH1. Interacts with DDX3X; the interaction may be induced upon virus infection. Interacts with TRIM6 (via SPRY box). Interacts with unanchored K48-linked polyubiquitin chains; this leads to IKBKE activation. Interacts with TBK1. Interacts with FKBP5. As to quaternary structure, (Microbial infection) Interacts (via Protein kinase domain) with arenavirus protein N; the interaction inhibits IKBKE kinase function. (Microbial infection) Interacts with Ebola virus protein VP35; the interaction leads to inhibition of cellular antiviral response by blocking necessary interactions between the IKBKE and MAVS/IPS as well as its substrates IRF3 and IRF7. In terms of assembly, (Microbial infection) Interacts with Severe fever with thrombocytopenia virus (SFTSV) NSs; this interaction this interaction sequesters IKBKE in NSs-induced cytoplasmic inclusion bodies thereby inhibiting the IFN responses. As to quaternary structure, (Microbial infection) Interacts with human T-cell leukemia virus 1/HTLV-1 protein HBZ. (Microbial infection) Interacts with Epstein-Barr virus (EBV) protein NEC2/BFRF1; this interaction inhibits IKBKE kinase activity and IRF3 nuclear translocation. Autophosphorylated and phosphorylated by IKBKB/IKKB. Phosphorylation at Ser-172 is enhanced by the interaction with DDX3X. Phosphorylated at Thr-501 upon IFN activation. Post-translationally, sumoylation by TOPORS upon DNA damage is required for protection of cells against DNA damage-induced cell death. Desumoylated by SENP1. In terms of processing, 'Lys-63'-linked polyubiquitinated at Lys-30 and Lys-401 by TRAF2:BIRC2 and TRAF2:BIRC3 complexes. Ubiquitination is induced by LPS, TNFA and interleukin-1 and required for full kinase activity and KF-kappa-B pathway activation. In terms of tissue distribution, highly expressed in spleen followed by thymus, peripheral blood leukocytes, pancreas, placenta. Weakly expressed in lung, kidney, prostate, ovary and colon.

It localises to the cytoplasm. The protein resides in the nucleus. Its subcellular location is the PML body. It catalyses the reaction L-seryl-[I-kappa-B protein] + ATP = O-phospho-L-seryl-[I-kappa-B protein] + ADP + H(+). Its function is as follows. Serine/threonine kinase that plays an essential role in regulating inflammatory responses to viral infection, through the activation of the type I IFN, NF-kappa-B and STAT signaling. Also involved in TNFA and inflammatory cytokines, like Interleukin-1, signaling. Following activation of viral RNA sensors, such as RIG-I-like receptors, associates with DDX3X and phosphorylates interferon regulatory factors (IRFs), IRF3 and IRF7, as well as DDX3X. This activity allows subsequent homodimerization and nuclear translocation of the IRF3 leading to transcriptional activation of pro-inflammatory and antiviral genes including IFNB. In order to establish such an antiviral state, IKBKE forms several different complexes whose composition depends on the type of cell and cellular stimuli. Thus, several scaffolding molecules including IPS1/MAVS, TANK, AZI2/NAP1 or TBKBP1/SINTBAD can be recruited to the IKBKE-containing-complexes. Activated by polyubiquitination in response to TNFA and interleukin-1, regulates the NF-kappa-B signaling pathway through, at least, the phosphorylation of CYLD. Phosphorylates inhibitors of NF-kappa-B thus leading to the dissociation of the inhibitor/NF-kappa-B complex and ultimately the degradation of the inhibitor. In addition, is also required for the induction of a subset of ISGs which displays antiviral activity, may be through the phosphorylation of STAT1 at 'Ser-708'. Phosphorylation of STAT1 at 'Ser-708' also seems to promote the assembly and DNA binding of ISGF3 (STAT1:STAT2:IRF9) complexes compared to GAF (STAT1:STAT1) complexes, in this way regulating the balance between type I and type II IFN responses. Protects cells against DNA damage-induced cell death. Also plays an important role in energy balance regulation by sustaining a state of chronic, low-grade inflammation in obesity, wich leads to a negative impact on insulin sensitivity. Phosphorylates AKT1. This Homo sapiens (Human) protein is Inhibitor of nuclear factor kappa-B kinase subunit epsilon (IKBKE).